Reading from the N-terminus, the 382-residue chain is uncharacterized protein (382 aa).

12 helical membrane passes run 8–28 (VMLLLCGLLLLTLAIAVLNTL), 45–65 (MVSSSYFTGNLVGTLFTGYLI), 75–95 (YLASLIFAAGCVGLGVMVGFW), 102–122 (FIAGIGCAMIWVVVESALMCS), 131–151 (LLAAYMMAYYMGTFLGQLLVS), 157–177 (LLHVLPWVTGMILAGILPLLF), 204–224 (LGVNGCIISGIVLGSLYGLMP), 231–251 (GMANASIGFWMAVLVSAGILG), 270–290 (VQVFVVILGSIAMLTQAAMAP), 291–311 (ALFILGAAGFTLYPVAMAWAC), 325–345 (ALLLSYTVGSLLGPSFAAMLM), and 349–369 (SDNLLFIMIASVSFIYLLMLL).

It belongs to the major facilitator superfamily. YcaD (TC 2.A.1.26) family.

Its subcellular location is the cell inner membrane. This is an uncharacterized protein from Salmonella enteritidis PT4 (strain P125109).